A 276-amino-acid chain; its full sequence is ATP synthase subunit a (276 aa).

A run of 6 helical transmembrane segments spans residues 27-47 (ITMLAGLSVLNLFPLAALEVG), 61-81 (GQTFATSWFVILLLVIASLAA), 120-140 (LPFIGTLFLFIFVSNWSGALL), 159-179 (DINTTVALALLTSLAYFYAGL), 225-245 (LVVAVLVLLVPLLVPLPLMAL), and 246-266 (GLFTSAIQALVFATLAGAYIH).

This sequence belongs to the ATPase A chain family. As to quaternary structure, F-type ATPases have 2 components, CF(1) - the catalytic core - and CF(0) - the membrane proton channel. CF(1) has five subunits: alpha(3), beta(3), gamma(1), delta(1), epsilon(1). CF(0) has four main subunits: a, b, b' and c.

Its subcellular location is the cellular thylakoid membrane. Its function is as follows. Key component of the proton channel; it plays a direct role in the translocation of protons across the membrane. This chain is ATP synthase subunit a, found in Synechocystis sp. (strain ATCC 27184 / PCC 6803 / Kazusa).